The primary structure comprises 551 residues: Protein GZF3 (551 aa).

The interval 17–43 (DNVFEPKSSENLNSLNQSEEEGHIGRW) is disordered. The segment at 131–155 (CKNCLTSTTPLWRRDEHGAMLCNAC) adopts a GATA-type zinc-finger fold. 3 disordered regions span residues 212–260 (GRKA…SATK), 379–400 (LAPT…QIRS), and 467–490 (SISN…AKDL). Residues 228 to 239 (SQLLMGTSSTAK) show a composition bias toward polar residues. Basic and acidic residues predominate over residues 244 to 254 (PKTESKERSDS). The segment covering 388-400 (DSNPSEVPNQIRS) has biased composition (polar residues). The segment covering 467 to 477 (SISNSVSSSDV) has biased composition (low complexity). Basic and acidic residues predominate over residues 478-490 (SGRKFENHPAKDL).

It localises to the nucleus. This is Protein GZF3 (GZF3) from Saccharomyces cerevisiae (strain ATCC 204508 / S288c) (Baker's yeast).